Reading from the N-terminus, the 84-residue chain is N.vectensis toxin 5 (84 aa).

Residues 1-21 (MNSLLKVAVVCLVMLVACSSG) form the signal peptide. 3 cysteine pairs are disulfide-bonded: C45–C77, C47–C68, and C61–C78.

In terms of tissue distribution, expressed in ectodermal gland cells. In adult female tissues, highly transcribed in mesenteries (gametes-producing tissue) and slightly transcribed in tentacles, pharynx and physa.

Functionally, has toxic effects on zebrafish larvae. It causes contractile paralysis and twitching of the tail within 20 minutes, followed by death within 30 minutes. Does not show any toxicity when injected into arthropods (cherry shrimps or grass shrimps). The chain is N.vectensis toxin 5 from Nematostella vectensis (Starlet sea anemone).